A 543-amino-acid chain; its full sequence is Carboxypeptidase Y homolog A (543 aa).

Residues 1-17 (MRVLPATLLVGAATAAA) form the signal peptide. Positions 18–124 (PPFQQILGLP…KLEAYDLRVK (107 aa)) are excised as a propeptide. Cystine bridges form between Cys179–Cys419, Cys313–Cys327, Cys337–Cys360, Cys344–Cys353, and Cys382–Cys389. An N-linked (GlcNAc...) asparagine glycan is attached at Asn210. Ser266 is a catalytic residue. Residue Asp458 is part of the active site. A glycan (N-linked (GlcNAc...) asparagine) is linked at Asn509. His520 is a catalytic residue.

This sequence belongs to the peptidase S10 family.

The protein resides in the vacuole. The enzyme catalyses Release of a C-terminal amino acid with broad specificity.. Functionally, vacuolar carboxypeptidase involved in degradation of small peptides. Digests preferentially peptides containing an aliphatic or hydrophobic residue in P1' position, as well as methionine, leucine or phenylalanine in P1 position of ester substrate. The chain is Carboxypeptidase Y homolog A (cpyA) from Neosartorya fischeri (strain ATCC 1020 / DSM 3700 / CBS 544.65 / FGSC A1164 / JCM 1740 / NRRL 181 / WB 181) (Aspergillus fischerianus).